The sequence spans 223 residues: MQAALKLQSDDARPLQILIVDDHPVVAEGWGRIIRTKTACEIASAPSASEGWRAWRQARPDLMVVDLSIGRNKIAGIRLIERLRRVDPDLPILVFTMHRSPVLARRALMFGANGIINKDSPPAEICAAFTEVARGGNYVDSRLAMQIALLNVSRPGTSAPRLTGREEEILGMITEGMSYRDIADRACISYKTVSNVSLVLKDKLGAANLADLVVKGIRYFEGD.

A Response regulatory domain is found at 16 to 133 (QILIVDDHPV…EICAAFTEVA (118 aa)). The HTH luxR-type domain occupies 155–220 (PGTSAPRLTG…DLVVKGIRYF (66 aa)). A DNA-binding region (H-T-H motif) is located at residues 179–198 (YRDIADRACISYKTVSNVSL).

Post-translationally, phosphorylated by MoxY.

Its subcellular location is the cytoplasm. Functionally, member of the two-component regulatory system MoxY/MoxX probably involved in the regulation of the methanol dehydrogenase expression. This Paracoccus denitrificans protein is Methanol utilization control regulatory protein MoxX (moxX).